A 287-amino-acid polypeptide reads, in one-letter code: uncharacterized protein (287 aa).

The protein belongs to the AllH family.

This is an uncharacterized protein from Escherichia coli (strain K12).